The following is a 541-amino-acid chain: EH domain-containing protein 4 (541 aa).

Residue methionine 1 is modified to N-acetylmethionine. A disordered region spans residues 1–20; that stretch reads MFSWMGRQAGGRERSGGMDA. The residue at position 15 (serine 15) is a Phosphoserine. Residues 58–289 enclose the Dynamin-type G domain; that stretch reads FENKPMILLV…DLFRDIQSLP (232 aa). A G1 motif region spans residues 68 to 75; sequence GQYSTGKT. 68–75 lines the ATP pocket; sequence GQYSTGKT. The tract at residues 94–95 is G2 motif; it reads EP. The interval 156–159 is G3 motif; sequence DSPG. Serine 162 is modified (phosphoserine). Residues 222–225 are G4 motif; the sequence is NKAD. Lysine 223 is a binding site for ATP. A region of interest (G5 motif) is located at residue valine 246. An ATP-binding site is contributed by tryptophan 261. An EH domain is found at 447–535; it reads DKPVYDELFY…PHLVPPSHRK (89 aa). Tyrosine 451 is subject to Phosphotyrosine. Phosphoserine is present on serine 459. An EF-hand domain is found at 479-514; the sequence is LPNSVLGKIWKLADCDCDGMLDEEEFALAKHLIKIK. Ca(2+) contacts are provided by aspartate 492, aspartate 494, aspartate 496, methionine 498, and glutamate 503.

Belongs to the TRAFAC class dynamin-like GTPase superfamily. Dynamin/Fzo/YdjA family. EHD subfamily. In terms of assembly, homooligomer, and heterooligomer with EHD1, EHD2 and EHD3. Forms a complex with EHD4 and MICALL1; the complex controls CDH5 trafficking and coordinates angiogenesis.

It localises to the early endosome membrane. Its subcellular location is the recycling endosome membrane. It is found in the cell membrane. The protein localises to the cell junction. The protein resides in the adherens junction. Functionally, ATP- and membrane-binding protein that probably controls membrane reorganization/tubulation upon ATP hydrolysis. Plays a role in early endosomal transport. During sprouting angiogenesis, in complex with PACSIN2 and MICALL1, forms recycling endosome-like tubular structure at asymmetric adherens junctions to control CDH5 trafficking. This chain is EH domain-containing protein 4, found in Mus musculus (Mouse).